A 40-amino-acid polypeptide reads, in one-letter code: Photosystem I reaction center subunit IX (40 aa).

Residues 12–34 (APVLLTAWMSLTAGMIIEIQRFF) form a helical membrane-spanning segment.

It belongs to the PsaJ family.

It localises to the plastid. It is found in the chloroplast thylakoid membrane. In terms of biological role, may help in the organization of the PsaE and PsaF subunits. This chain is Photosystem I reaction center subunit IX, found in Emiliania huxleyi (Coccolithophore).